Reading from the N-terminus, the 277-residue chain is Intercellular adhesion molecule 2 (277 aa).

Residues Met1–Glu22 form the signal peptide. The Extracellular portion of the chain corresponds to Lys23–Gln222. 2 consecutive Ig-like C2-type domains span residues Thr39–Lys98 and Gly127–Arg196. N-linked (GlcNAc...) asparagine glycans are attached at residues Asn45, Asn82, Asn158, Asn176, and Asn186. Cystine bridges form between Cys46-Cys91, Cys50-Cys95, and Cys134-Cys189. A helical transmembrane segment spans residues Met223–Phe247. The Cytoplasmic segment spans residues Gly248 to Val277. Residues His250–Val277 form a required for interaction with EZR, MSN and RDX and co-localization to microvilli region.

This sequence belongs to the immunoglobulin superfamily. ICAM family. As to quaternary structure, interacts with RDX, EZR and MSN. Expressed in endothelial cells and leukocytes. High levels found in lung.

The protein resides in the membrane. It is found in the cell projection. It localises to the microvillus. In terms of biological role, ICAM proteins are ligands for the leukocyte adhesion protein LFA-1 (integrin alpha-L/beta-2). ICAM2 may play a role in lymphocyte recirculation by blocking LFA-1-dependent cell adhesion. It mediates adhesive interactions important for antigen-specific immune response, NK-cell mediated clearance, lymphocyte recirculation, and other cellular interactions important for immune response and surveillance. In Mus musculus (Mouse), this protein is Intercellular adhesion molecule 2 (Icam2).